The sequence spans 250 residues: Small ribosomal subunit protein uS2 (250 aa).

It belongs to the universal ribosomal protein uS2 family.

The polypeptide is Small ribosomal subunit protein uS2 (Polaromonas sp. (strain JS666 / ATCC BAA-500)).